The sequence spans 318 residues: Endochitinase 1 (318 aa).

The signal sequence occupies residues 1–18 (EFTTLFLLFSVLLLSASA). The 42-residue stretch at 19 to 60 (EQCGSQAGGALCASGLCCSKFGWCGDTNDYCGPGNCQSQCPG) folds into the Chitin-binding type-1 domain. 7 disulfides stabilise this stretch: Cys21/Cys36, Cys30/Cys42, Cys35/Cys49, Cys54/Cys58, Cys89/Cys152, Cys164/Cys172, and Cys271/Cys303. Glu134 serves as the catalytic Proton donor. Positions 312–318 (GLLVDTM) are cleaved as a propeptide — removed in mature form, vacuolar targeting.

This sequence belongs to the glycosyl hydrolase 19 family. Chitinase class I subfamily.

It localises to the vacuole. It catalyses the reaction Random endo-hydrolysis of N-acetyl-beta-D-glucosaminide (1-&gt;4)-beta-linkages in chitin and chitodextrins.. Its function is as follows. Defense against chitin-containing fungal pathogens. In Solanum tuberosum (Potato), this protein is Endochitinase 1 (CHTB1).